A 447-amino-acid chain; its full sequence is Beclin-1 (447 aa).

Low complexity predominate over residues 44-53 (PPLTAAPARP). The tract at residues 44-71 (PPLTAAPARPGDAQEESALSEEAFTEGR) is disordered. The BH3 motif lies at 105–124 (TMENLSRRLKVTGDLFDIMS). Positions 139–266 (DTLLDQLDTQ…QLDKLKKTNV (128 aa)) form a coiled coil. An evolutionary conserved domain (ECD) region spans residues 242–447 (DELKSVENQM…AWVSSQFYNK (206 aa)). The tract at residues 422–447 (WTKALKFMLTNLKWGLAWVSSQFYNK) is required for membrane-association.

It belongs to the beclin family. As to quaternary structure, component of the PI3K (PI3KC3/PI3K-III/class III phosphatidylinositol 3-kinase) complex. In terms of processing, may be proteolytically processed by caspases; the C-terminal fragment(s) may induce apoptosis.

The protein resides in the cytoplasm. It is found in the golgi apparatus. It localises to the trans-Golgi network membrane. The protein localises to the endosome membrane. Its subcellular location is the endoplasmic reticulum membrane. The protein resides in the mitochondrion membrane. It is found in the cytoplasmic vesicle. It localises to the autophagosome. Its function is as follows. Plays a central role in autophagy. Acts as core subunit of different PI3K complex forms that mediate formation of phosphatidylinositol 3-phosphate and are believed to play a role in multiple membrane trafficking pathways such as initiation of autophagosomes, maturation of autophagosomes and endocytosis. Involved in regulation of degradative endocytic trafficking and required for the abscission step in cytokinesis, probably in the context of PI3KC3-C2. This Gallus gallus (Chicken) protein is Beclin-1 (BECN1).